The sequence spans 317 residues: Tricarboxylate transport protein B, mitochondrial (317 aa).

Residues 1–20 constitute a propeptide, removed in mature form; the sequence is MSGSPKFVSPFHRPHCLSAA. Solcar repeat units follow at residues 29-117, 128-214, and 224-309; these read THPG…LSNQ, TRGL…LRNW, and INPV…VVKV. 4 consecutive transmembrane segments (helical) span residues 35–55, 130–150, 223–243, and 294–314; these read ILAG…TEYV, GLIC…CPME, SINP…SVFG, and MDVA…NKVW.

This sequence belongs to the mitochondrial carrier (TC 2.A.29) family. Post-translationally, possesses a short cleavable presequence, which, however, is found to be dispensable both for targeting to mitochondria and insertion into the inner membrane. However, the presequence is required to keep SLC25A1 in a soluble state and thus in an import-competent state. Mature SLC25A1 lacking the presequence is prone to aggregation.

It localises to the mitochondrion inner membrane. The enzyme catalyses (S)-malate(in) + citrate(out) = (S)-malate(out) + citrate(in). It catalyses the reaction D-threo-isocitrate(in) + citrate(out) = D-threo-isocitrate(out) + citrate(in). The catalysed reaction is citrate(out) + succinate(in) = citrate(in) + succinate(out). It carries out the reaction cis-aconitate(in) + citrate(out) = cis-aconitate(out) + citrate(in). The enzyme catalyses trans-aconitate(in) + citrate(out) = trans-aconitate(out) + citrate(in). It catalyses the reaction phosphoenolpyruvate(in) + citrate(out) = phosphoenolpyruvate(out) + citrate(in). The catalysed reaction is maleate(in) + citrate(out) = maleate(out) + citrate(in). Its function is as follows. Mitochondrial electroneutral antiporter that exports citrate from the mitochondria into the cytosol in exchange for malate. Also able to mediate the exchange of citrate for isocitrate, phosphoenolpyruvate, cis-aconitate and to a lesser extent trans-aconitate, maleate and succinate. In the cytoplasm, citrate plays important roles in fatty acid and sterol synthesis, regulation of glycolysis, protein acetylation, and other physiopathological processes. This is Tricarboxylate transport protein B, mitochondrial from Danio rerio (Zebrafish).